The primary structure comprises 195 residues: ATP-dependent Clp protease proteolytic subunit (195 aa).

Serine 99 acts as the Nucleophile in catalysis. Histidine 124 is a catalytic residue.

This sequence belongs to the peptidase S14 family. As to quaternary structure, fourteen ClpP subunits assemble into 2 heptameric rings which stack back to back to give a disk-like structure with a central cavity, resembling the structure of eukaryotic proteasomes.

The protein localises to the cytoplasm. The catalysed reaction is Hydrolysis of proteins to small peptides in the presence of ATP and magnesium. alpha-casein is the usual test substrate. In the absence of ATP, only oligopeptides shorter than five residues are hydrolyzed (such as succinyl-Leu-Tyr-|-NHMec, and Leu-Tyr-Leu-|-Tyr-Trp, in which cleavage of the -Tyr-|-Leu- and -Tyr-|-Trp bonds also occurs).. Cleaves peptides in various proteins in a process that requires ATP hydrolysis. Has a chymotrypsin-like activity. Plays a major role in the degradation of misfolded proteins. This is ATP-dependent Clp protease proteolytic subunit from Coxiella burnetii (strain CbuG_Q212) (Coxiella burnetii (strain Q212)).